The chain runs to 425 residues: Histidine--tRNA ligase (425 aa).

Belongs to the class-II aminoacyl-tRNA synthetase family. As to quaternary structure, homodimer.

It is found in the cytoplasm. The catalysed reaction is tRNA(His) + L-histidine + ATP = L-histidyl-tRNA(His) + AMP + diphosphate + H(+). The protein is Histidine--tRNA ligase of Tolumonas auensis (strain DSM 9187 / NBRC 110442 / TA 4).